The chain runs to 348 residues: Probable protein phosphatase 2C 35 (348 aa).

The segment covering 11 to 24 has biased composition (low complexity); sequence RYPSSSSDGDSRGP. The tract at residues 11-40 is disordered; it reads RYPSSSSDGDSRGPLEANGVLKGKDQKPLG. In terms of domain architecture, PPM-type phosphatase spans 52–342; sequence VYSVLSQRGY…DDITIIIVQI (291 aa). 4 residues coordinate Mn(2+): Asp93, Gly94, Asp289, and Asp333.

This sequence belongs to the PP2C family. Requires Mg(2+) as cofactor. It depends on Mn(2+) as a cofactor.

It catalyses the reaction O-phospho-L-seryl-[protein] + H2O = L-seryl-[protein] + phosphate. The enzyme catalyses O-phospho-L-threonyl-[protein] + H2O = L-threonyl-[protein] + phosphate. The protein is Probable protein phosphatase 2C 35 of Arabidopsis thaliana (Mouse-ear cress).